Reading from the N-terminus, the 128-residue chain is Small nuclear ribonucleoprotein associated homolog 13 (128 aa).

The protein belongs to the eukaryotic ribosomal protein eL8 family.

The protein resides in the nucleus. The protein localises to the nucleolus. Its function is as follows. Binds to the 5'-stem-loop of U4 snRNA and may play a role in the late stage of spliceosome assembly. The protein undergoes a conformational change upon RNA-binding. The protein is Small nuclear ribonucleoprotein associated homolog 13 of Caenorhabditis elegans.